The sequence spans 183 residues: Oligoribonuclease (183 aa).

The Exonuclease domain maps to Leu-9 to Leu-172. The active site involves Tyr-130.

This sequence belongs to the oligoribonuclease family.

The protein resides in the cytoplasm. In terms of biological role, 3'-to-5' exoribonuclease specific for small oligoribonucleotides. The polypeptide is Oligoribonuclease (Acinetobacter baylyi (strain ATCC 33305 / BD413 / ADP1)).